A 325-amino-acid polypeptide reads, in one-letter code: tRNA dimethylallyltransferase (325 aa).

An ATP-binding site is contributed by 21–28 (GPTASGKS). 23–28 (TASGKS) lines the substrate pocket. The interval 166 to 170 (QRLAR) is interaction with substrate tRNA.

Belongs to the IPP transferase family. Monomer. It depends on Mg(2+) as a cofactor.

The catalysed reaction is adenosine(37) in tRNA + dimethylallyl diphosphate = N(6)-dimethylallyladenosine(37) in tRNA + diphosphate. Its function is as follows. Catalyzes the transfer of a dimethylallyl group onto the adenine at position 37 in tRNAs that read codons beginning with uridine, leading to the formation of N6-(dimethylallyl)adenosine (i(6)A). The sequence is that of tRNA dimethylallyltransferase from Acidiphilium cryptum (strain JF-5).